A 92-amino-acid chain; its full sequence is Bombyxin A-5 (92 aa).

The N-terminal stretch at Met-1–Thr-19 is a signal peptide. Residue Gln-20 is modified to Pyrrolidone carboxylic acid. 3 cysteine pairs are disulfide-bonded: Cys-29/Cys-79, Cys-41/Cys-92, and Cys-78/Cys-83. The propeptide at Ser-50–Gln-71 is c peptide like.

The protein belongs to the insulin family. Heterodimer of a B chain and an A chain linked by two disulfide bonds.

The protein localises to the secreted. In terms of biological role, brain peptide responsible for activation of prothoracic glands to produce ecdysone in insects. This chain is Bombyxin A-5 (BBXA5), found in Bombyx mori (Silk moth).